We begin with the raw amino-acid sequence, 205 residues long: ATP phosphoribosyltransferase (205 aa).

The protein belongs to the ATP phosphoribosyltransferase family. Short subfamily. In terms of assembly, heteromultimer composed of HisG and HisZ subunits.

The protein resides in the cytoplasm. It carries out the reaction 1-(5-phospho-beta-D-ribosyl)-ATP + diphosphate = 5-phospho-alpha-D-ribose 1-diphosphate + ATP. It functions in the pathway amino-acid biosynthesis; L-histidine biosynthesis; L-histidine from 5-phospho-alpha-D-ribose 1-diphosphate: step 1/9. Its function is as follows. Catalyzes the condensation of ATP and 5-phosphoribose 1-diphosphate to form N'-(5'-phosphoribosyl)-ATP (PR-ATP). Has a crucial role in the pathway because the rate of histidine biosynthesis seems to be controlled primarily by regulation of HisG enzymatic activity. In Nitratiruptor sp. (strain SB155-2), this protein is ATP phosphoribosyltransferase.